The primary structure comprises 276 residues: Anamorsin homolog (276 aa).

The interval 1–152 (MEPYVVDNLN…TRGSSIKLPW (152 aa)) is N-terminal SAM-like domain. Residues 152-189 (WAHSDIEAAWENVDNETSYDVDKNLINTNSLLQKSDYV) are linker. [2Fe-2S] cluster-binding residues include Cys195, Cys211, Cys214, and Cys216. The fe-S binding site A stretch occupies residues 195 to 216 (CGQEFAKNSIGKRKRACKNCTC). Residues Cys237, Cys240, Cys248, and Cys251 each coordinate [4Fe-4S] cluster. 2 short sequence motifs (cx2C motif) span residues 237-240 (CGNC) and 248-251 (CSTC). The interval 237-251 (CGNCYLGDAFRCSTC) is fe-S binding site B.

This sequence belongs to the anamorsin family. As to quaternary structure, monomer. Requires [2Fe-2S] cluster as cofactor. The cofactor is [4Fe-4S] cluster.

Its subcellular location is the cytoplasm. The protein localises to the mitochondrion intermembrane space. Its function is as follows. Component of the cytosolic iron-sulfur (Fe-S) protein assembly (CIA) machinery. Required for the maturation of extramitochondrial Fe-S proteins. Part of an electron transfer chain functioning in an early step of cytosolic Fe-S biogenesis, facilitating the de novo assembly of a [4Fe-4S] cluster on the cytosolic Fe-S scaffold complex. Electrons are transferred from NADPH via a FAD- and FMN-containing diflavin oxidoreductase. Together with the diflavin oxidoreductase, also required for the assembly of the diferric tyrosyl radical cofactor of ribonucleotide reductase (RNR), probably by providing electrons for reduction during radical cofactor maturation in the catalytic small subunit. The sequence is that of Anamorsin homolog from Schistosoma japonicum (Blood fluke).